The following is a 381-amino-acid chain: Succinyl-diaminopimelate desuccinylase (381 aa).

His70 provides a ligand contact to Zn(2+). Asp72 is a catalytic residue. Asp103 contributes to the Zn(2+) binding site. Glu136 acts as the Proton acceptor in catalysis. Residues Glu137, Glu165, and His354 each coordinate Zn(2+).

The protein belongs to the peptidase M20A family. DapE subfamily. As to quaternary structure, homodimer. Requires Zn(2+) as cofactor. The cofactor is Co(2+).

It catalyses the reaction N-succinyl-(2S,6S)-2,6-diaminopimelate + H2O = (2S,6S)-2,6-diaminopimelate + succinate. It participates in amino-acid biosynthesis; L-lysine biosynthesis via DAP pathway; LL-2,6-diaminopimelate from (S)-tetrahydrodipicolinate (succinylase route): step 3/3. Its function is as follows. Catalyzes the hydrolysis of N-succinyl-L,L-diaminopimelic acid (SDAP), forming succinate and LL-2,6-diaminopimelate (DAP), an intermediate involved in the bacterial biosynthesis of lysine and meso-diaminopimelic acid, an essential component of bacterial cell walls. The polypeptide is Succinyl-diaminopimelate desuccinylase (Roseobacter denitrificans (strain ATCC 33942 / OCh 114) (Erythrobacter sp. (strain OCh 114))).